The chain runs to 567 residues: Hexose transporter HXT9 (567 aa).

Residues 1–16 are compositionally biased toward polar residues; it reads MSGVNNTSANDLSTTE. Residues 1–45 are disordered; it reads MSGVNNTSANDLSTTESNSNSVANAPSVKTEHNDSKNSLNLDATE. Residues 1–56 lie on the Cytoplasmic side of the membrane; the sequence is MSGVNNTSANDLSTTESNSNSVANAPSVKTEHNDSKNSLNLDATEPPIDLPQKPLS. The span at 17-28 shows a compositional bias: low complexity; it reads SNSNSVANAPSV. A helical transmembrane segment spans residues 57-77; it reads AYTTVAILCLMIAFGGFIFGW. Over 78–112 the chain is Extracellular; that stretch reads DTGTISGFVNLSDFIRRFGQKNDKGTYYLSKVRMG. Asparagine 87 is a glycosylation site (N-linked (GlcNAc...) asparagine). A helical transmembrane segment spans residues 113–133; that stretch reads LIVSIFNIGCAIGGIVLSKVG. The Cytoplasmic portion of the chain corresponds to 134-139; that stretch reads DIYGRR. Residues 140–160 traverse the membrane as a helical segment; the sequence is IGLITVTAIYVVGILIQITSI. Residues 161–170 lie on the Extracellular side of the membrane; it reads NKWYQYFIGR. Residues 171-191 form a helical membrane-spanning segment; it reads IISGLGVGGIAVLSPMLISEV. The Cytoplasmic segment spans residues 192-197; the sequence is APKQIR. The helical transmembrane segment at 198–218 threads the bilayer; the sequence is GTLVQLYQLMCTMGIFLGYCT. Residues 219–232 lie on the Extracellular side of the membrane; it reads NYGTKNYHNATQWR. N-linked (GlcNAc...) asparagine glycosylation occurs at asparagine 227. A helical membrane pass occupies residues 233-253; the sequence is VGLGLCFAWTTFMVSGMMFVP. Residues 254–336 lie on the Cytoplasmic side of the membrane; that stretch reads ESPRYLIEVG…IQSLQQLTGD (83 aa). A helical membrane pass occupies residues 337–353; it reads NYFFYYGTTIFKSVGLK. At 354 to 359 the chain is on the extracellular side; that stretch reads DSFQTS. A helical transmembrane segment spans residues 360–377; the sequence is IIIGVVNFFSSFIAVYTI. Topologically, residues 378-384 are cytoplasmic; the sequence is ERFGRRT. A helical transmembrane segment spans residues 385–405; sequence CLLWGAASMLCCFAVFASVGV. Over 406 to 429 the chain is Extracellular; the sequence is TKLWPQGSSHQDITSQGAGNCMIV. The helical transmembrane segment at 430–450 threads the bilayer; it reads FTMFFIFSFATTWAGGCYVIV. Residues 451-467 are Cytoplasmic-facing; sequence SETFPLRVKSRGMAIAT. The chain crosses the membrane as a helical span at residues 468–488; sequence AANWMWGFLISFFTPFITGAI. Asparagine 489 is a topological domain (extracellular). A helical transmembrane segment spans residues 490-510; that stretch reads FYYGYVFLGCLVFAYFYVFFF. Over 511–567 the chain is Cytoplasmic; that stretch reads VPETKGLTLEEVNTMWLEGVPAWKSASWVPPERRTADYDADAIDHDDRPIYKRFFSS.

Belongs to the major facilitator superfamily. Sugar transporter (TC 2.A.1.1) family.

The protein resides in the membrane. Its function is as follows. Probable glucose transporter. The sequence is that of Hexose transporter HXT9 (HXT9) from Saccharomyces cerevisiae (strain ATCC 204508 / S288c) (Baker's yeast).